Consider the following 156-residue polypeptide: S-ribosylhomocysteine lyase (156 aa).

Fe cation contacts are provided by His-56, His-60, and Cys-123.

The protein belongs to the LuxS family. Homodimer. The cofactor is Fe cation.

The catalysed reaction is S-(5-deoxy-D-ribos-5-yl)-L-homocysteine = (S)-4,5-dihydroxypentane-2,3-dione + L-homocysteine. Functionally, involved in the synthesis of autoinducer 2 (AI-2) which is secreted by bacteria and is used to communicate both the cell density and the metabolic potential of the environment. The regulation of gene expression in response to changes in cell density is called quorum sensing. Catalyzes the transformation of S-ribosylhomocysteine (RHC) to homocysteine (HC) and 4,5-dihydroxy-2,3-pentadione (DPD). This is S-ribosylhomocysteine lyase from Staphylococcus saprophyticus subsp. saprophyticus (strain ATCC 15305 / DSM 20229 / NCIMB 8711 / NCTC 7292 / S-41).